The following is a 387-amino-acid chain: Gamma-butyrobetaine dioxygenase (387 aa).

Residues cysteine 38, cysteine 40, cysteine 43, and histidine 82 each contribute to the Zn(2+) site. Fe cation is bound by residues histidine 202, aspartate 204, and histidine 347. At serine 351 the chain carries Phosphoserine.

It belongs to the gamma-BBH/TMLD family. Fe(2+) is required as a cofactor. L-ascorbate serves as cofactor. Expressed in the liver and in some extend in the testis and the epididymis.

The protein localises to the cytoplasm. The enzyme catalyses 4-(trimethylamino)butanoate + 2-oxoglutarate + O2 = carnitine + succinate + CO2. It participates in amine and polyamine biosynthesis; carnitine biosynthesis. Its function is as follows. Catalyzes the formation of L-carnitine from gamma-butyrobetaine. This is Gamma-butyrobetaine dioxygenase (Bbox1) from Rattus norvegicus (Rat).